A 312-amino-acid polypeptide reads, in one-letter code: Glyoxylate/hydroxypyruvate reductase A (312 aa).

Arg227 is a catalytic residue. Catalysis depends on His275, which acts as the Proton donor.

It belongs to the D-isomer specific 2-hydroxyacid dehydrogenase family. GhrA subfamily.

The protein localises to the cytoplasm. It carries out the reaction glycolate + NADP(+) = glyoxylate + NADPH + H(+). The enzyme catalyses (R)-glycerate + NAD(+) = 3-hydroxypyruvate + NADH + H(+). It catalyses the reaction (R)-glycerate + NADP(+) = 3-hydroxypyruvate + NADPH + H(+). Its function is as follows. Catalyzes the NADPH-dependent reduction of glyoxylate and hydroxypyruvate into glycolate and glycerate, respectively. This Escherichia coli O127:H6 (strain E2348/69 / EPEC) protein is Glyoxylate/hydroxypyruvate reductase A.